A 248-amino-acid chain; its full sequence is Type III pantothenate kinase (248 aa).

6–13 lines the ATP pocket; it reads ELGNSQLK. Residues Tyr94 and 101–104 contribute to the substrate site; that span reads GVDR. Catalysis depends on Asp103, which acts as the Proton acceptor. Residue Asp123 coordinates K(+). Thr126 contacts ATP. Thr179 serves as a coordination point for substrate.

It belongs to the type III pantothenate kinase family. Homodimer. The cofactor is NH4(+). K(+) is required as a cofactor.

The protein resides in the cytoplasm. It carries out the reaction (R)-pantothenate + ATP = (R)-4'-phosphopantothenate + ADP + H(+). The protein operates within cofactor biosynthesis; coenzyme A biosynthesis; CoA from (R)-pantothenate: step 1/5. Its function is as follows. Catalyzes the phosphorylation of pantothenate (Pan), the first step in CoA biosynthesis. This chain is Type III pantothenate kinase, found in Hydrogenovibrio crunogenus (strain DSM 25203 / XCL-2) (Thiomicrospira crunogena).